A 413-amino-acid polypeptide reads, in one-letter code: Peptide chain release factor 1, mitochondrial (413 aa).

Gln287 is modified (N5-methylglutamine). Residues 335–363 (RLEKEEKERKARKSQVSSTNRSDKIRTYN) form a disordered region.

It belongs to the prokaryotic/mitochondrial release factor family. In terms of processing, methylation of glutamine in the GGQ triplet is conserved from bacteria to mammals. N5-methylated on Gln-287 by MTQ1.

The protein resides in the mitochondrion. Mitochondrial peptide chain release factor that directs the termination of translation in response to the peptide chain termination codons UAA and UAG. The sequence is that of Peptide chain release factor 1, mitochondrial (MRF1) from Saccharomyces cerevisiae (strain ATCC 204508 / S288c) (Baker's yeast).